A 142-amino-acid chain; its full sequence is Nucleoside diphosphate kinase (142 aa).

Positions 11, 59, 87, 93, 104, and 114 each coordinate ATP. Catalysis depends on histidine 117, which acts as the Pros-phosphohistidine intermediate.

It belongs to the NDK family. Homotetramer. Requires Mg(2+) as cofactor.

It is found in the cytoplasm. The enzyme catalyses a 2'-deoxyribonucleoside 5'-diphosphate + ATP = a 2'-deoxyribonucleoside 5'-triphosphate + ADP. It carries out the reaction a ribonucleoside 5'-diphosphate + ATP = a ribonucleoside 5'-triphosphate + ADP. Its function is as follows. Major role in the synthesis of nucleoside triphosphates other than ATP. The ATP gamma phosphate is transferred to the NDP beta phosphate via a ping-pong mechanism, using a phosphorylated active-site intermediate. In Salinibacter ruber (strain DSM 13855 / M31), this protein is Nucleoside diphosphate kinase.